A 193-amino-acid polypeptide reads, in one-letter code: Probable chemoreceptor glutamine deamidase CheD 1 (193 aa).

The tract at residues 1–26 (MPHTPPAYPAASADHRPPSSPPAEPA) is disordered.

This sequence belongs to the CheD family.

It catalyses the reaction L-glutaminyl-[protein] + H2O = L-glutamyl-[protein] + NH4(+). In terms of biological role, probably deamidates glutamine residues to glutamate on methyl-accepting chemotaxis receptors (MCPs), playing an important role in chemotaxis. This Chromobacterium violaceum (strain ATCC 12472 / DSM 30191 / JCM 1249 / CCUG 213 / NBRC 12614 / NCIMB 9131 / NCTC 9757 / MK) protein is Probable chemoreceptor glutamine deamidase CheD 1.